Reading from the N-terminus, the 472-residue chain is NADH-quinone oxidoreductase subunit N (472 aa).

14 consecutive transmembrane segments (helical) span residues 11-31 (AELS…FLPA), 43-63 (ILLT…LFGG), 67-87 (STPM…LVFL), 103-123 (GEFY…VSAG), 125-145 (FLLF…LVAF), 159-179 (FILS…MIYG), 200-220 (VLAL…VPFH), 234-254 (VSAY…MIIL), 265-285 (WSEI…LFAI), 293-313 (FMAF…LAGT), 318-338 (ASLV…FGVI), 362-384 (PKLT…FAGF), 401-421 (LIVF…LLIV), and 446-466 (LLVC…YQLL).

It belongs to the complex I subunit 2 family. NDH-1 is composed of 14 different subunits. Subunits NuoA, H, J, K, L, M, N constitute the membrane sector of the complex.

It localises to the cell inner membrane. The enzyme catalyses a quinone + NADH + 5 H(+)(in) = a quinol + NAD(+) + 4 H(+)(out). Its function is as follows. NDH-1 shuttles electrons from NADH, via FMN and iron-sulfur (Fe-S) centers, to quinones in the respiratory chain. The immediate electron acceptor for the enzyme in this species is believed to be a menaquinone. Couples the redox reaction to proton translocation (for every two electrons transferred, four hydrogen ions are translocated across the cytoplasmic membrane), and thus conserves the redox energy in a proton gradient. The chain is NADH-quinone oxidoreductase subunit N from Phocaeicola vulgatus (strain ATCC 8482 / DSM 1447 / JCM 5826 / CCUG 4940 / NBRC 14291 / NCTC 11154) (Bacteroides vulgatus).